Reading from the N-terminus, the 321-residue chain is Aspartate carbamoyltransferase catalytic subunit (321 aa).

2 residues coordinate carbamoyl phosphate: R60 and T61. K88 is a binding site for L-aspartate. The carbamoyl phosphate site is built by R110, H138, and Q141. L-aspartate-binding residues include R171 and R225. 2 residues coordinate carbamoyl phosphate: G266 and P267.

It belongs to the aspartate/ornithine carbamoyltransferase superfamily. ATCase family. As to quaternary structure, heterododecamer (2C3:3R2) of six catalytic PyrB chains organized as two trimers (C3), and six regulatory PyrI chains organized as three dimers (R2).

The catalysed reaction is carbamoyl phosphate + L-aspartate = N-carbamoyl-L-aspartate + phosphate + H(+). It functions in the pathway pyrimidine metabolism; UMP biosynthesis via de novo pathway; (S)-dihydroorotate from bicarbonate: step 2/3. Functionally, catalyzes the condensation of carbamoyl phosphate and aspartate to form carbamoyl aspartate and inorganic phosphate, the committed step in the de novo pyrimidine nucleotide biosynthesis pathway. The sequence is that of Aspartate carbamoyltransferase catalytic subunit from Sorangium cellulosum (strain So ce56) (Polyangium cellulosum (strain So ce56)).